We begin with the raw amino-acid sequence, 288 residues long: Polyamine aminopropyltransferase (288 aa).

Residues 9 to 242 (SEWLDEYHQG…GLWSWTFASM (234 aa)) form the PABS domain. Gln-36 is a binding site for S-methyl-5'-thioadenosine. Spermidine contacts are provided by His-67 and Asp-91. S-methyl-5'-thioadenosine contacts are provided by residues Glu-111 and 143–144 (NG). The Proton acceptor role is filled by Asp-162. Position 169 (Pro-169) interacts with S-methyl-5'-thioadenosine.

Belongs to the spermidine/spermine synthase family. In terms of assembly, homodimer or homotetramer.

Its subcellular location is the cytoplasm. It carries out the reaction S-adenosyl 3-(methylsulfanyl)propylamine + putrescine = S-methyl-5'-thioadenosine + spermidine + H(+). Its pathway is amine and polyamine biosynthesis; spermidine biosynthesis; spermidine from putrescine: step 1/1. Functionally, catalyzes the irreversible transfer of a propylamine group from the amino donor S-adenosylmethioninamine (decarboxy-AdoMet) to putrescine (1,4-diaminobutane) to yield spermidine. This Prochlorococcus marinus (strain NATL2A) protein is Polyamine aminopropyltransferase.